The sequence spans 247 residues: Enolase-phosphatase E1 (247 aa).

The protein belongs to the HAD-like hydrolase superfamily. MasA/MtnC family. As to quaternary structure, monomer. Requires Mg(2+) as cofactor.

The enzyme catalyses 5-methylsulfanyl-2,3-dioxopentyl phosphate + H2O = 1,2-dihydroxy-5-(methylsulfanyl)pent-1-en-3-one + phosphate. It participates in amino-acid biosynthesis; L-methionine biosynthesis via salvage pathway; L-methionine from S-methyl-5-thio-alpha-D-ribose 1-phosphate: step 3/6. The protein operates within amino-acid biosynthesis; L-methionine biosynthesis via salvage pathway; L-methionine from S-methyl-5-thio-alpha-D-ribose 1-phosphate: step 4/6. Functionally, bifunctional enzyme that catalyzes the enolization of 2,3-diketo-5-methylthiopentyl-1-phosphate (DK-MTP-1-P) into the intermediate 2-hydroxy-3-keto-5-methylthiopentenyl-1-phosphate (HK-MTPenyl-1-P), which is then dephosphorylated to form the acireductone 1,2-dihydroxy-3-keto-5-methylthiopentene (DHK-MTPene). The sequence is that of Enolase-phosphatase E1 from Leptospira biflexa serovar Patoc (strain Patoc 1 / Ames).